A 115-amino-acid polypeptide reads, in one-letter code: Large ribosomal subunit protein bL20 (115 aa).

The protein belongs to the bacterial ribosomal protein bL20 family.

In terms of biological role, binds directly to 23S ribosomal RNA and is necessary for the in vitro assembly process of the 50S ribosomal subunit. It is not involved in the protein synthesizing functions of that subunit. This Bdellovibrio bacteriovorus (strain ATCC 15356 / DSM 50701 / NCIMB 9529 / HD100) protein is Large ribosomal subunit protein bL20.